An 81-amino-acid polypeptide reads, in one-letter code: uncharacterized protein (81 aa).

Transmembrane regions (helical) follow at residues Phe-10–Leu-30 and Val-56–Ile-76.

The protein localises to the host membrane. This is an uncharacterized protein from Acidianus two-tailed virus (ATV).